The sequence spans 387 residues: Putative F-box protein At1g47800 (387 aa).

The 47-residue stretch at 8 to 54 (LQSLDHIPIDVLFEILVKLPAKSVARFLCVSKVWATMIRGEVFIRSF) folds into the F-box domain.

The sequence is that of Putative F-box protein At1g47800 from Arabidopsis thaliana (Mouse-ear cress).